Consider the following 226-residue polypeptide: Exosome complex component rrp46 (226 aa).

Residues 205 to 226 form a disordered region; the sequence is NESDGHENEKNPKEDVEMDVVA. The segment covering 207–219 has biased composition (basic and acidic residues); that stretch reads SDGHENEKNPKED.

It belongs to the RNase PH family. In terms of assembly, component of the RNA exosome complex. Specifically part of the catalytically inactive RNA exosome core complex (Exo-9) which may associate with the catalytic subunits rrp6 and dis3 in cytoplasmic- and nuclear-specific RNA exosome complex forms. Exo-9 is formed by a hexameric base ring of RNase PH domain-containing subunits and a cap ring consisting of csl4, rrp4 and rrp40.

The protein localises to the cytoplasm. Its subcellular location is the nucleus. The protein resides in the nucleolus. In terms of biological role, non-catalytic component of the RNA exosome complex which has 3'-&gt;5' exoribonuclease activity and participates in a multitude of cellular RNA processing and degradation events. In the nucleus, the RNA exosome complex is involved in proper maturation of stable RNA species such as rRNA, snRNA and snoRNA, in the elimination of RNA processing by-products and non-coding 'pervasive' transcripts, such as antisense RNA species and cryptic unstable transcripts (CUTs), and of mRNAs with processing defects, thereby limiting or excluding their export to the cytoplasm. In the cytoplasm, the RNA exosome complex is involved in general mRNA turnover and in RNA surveillance pathways, preventing translation of aberrant mRNAs. The catalytic inactive RNA exosome core complex of 9 subunits (Exo-9) is proposed to play a pivotal role in the binding and presentation of RNA for ribonucleolysis, and to serve as a scaffold for the association with catalytic subunits and accessory proteins or complexes. ski6 is part of the hexameric ring of RNase PH domain-containing subunits proposed to form a central channel which threads RNA substrates for degradation. The chain is Exosome complex component rrp46 (rrp46) from Schizosaccharomyces pombe (strain 972 / ATCC 24843) (Fission yeast).